The primary structure comprises 246 residues: Large ribosomal subunit protein uL4 (246 aa).

Residues 37–103 (AAQANRKQDY…TEKDRSLDLN (67 aa)) form a disordered region. Over residues 92–103 (PKTEKDRSLDLN) the composition is skewed to basic and acidic residues.

The protein belongs to the universal ribosomal protein uL4 family. As to quaternary structure, part of the 50S ribosomal subunit. Interacts weakly with proteins L18e, L24 and L37e. Has been cross-linked to L18e.

One of the primary rRNA binding proteins, this protein initially binds near the 5'-end of the 23S rRNA. It is important during the early stages of 50S assembly. In terms of biological role, makes multiple contacts with different domains of the 23S rRNA in the assembled 50S subunit. Functionally, forms part of the polypeptide exit tunnel, in which it helps forms a bend with protein L22. Contacts the macrolide antibiotic spiramycin in the polypeptide exit tunnel. The chain is Large ribosomal subunit protein uL4 (rpl4) from Haloarcula marismortui (strain ATCC 43049 / DSM 3752 / JCM 8966 / VKM B-1809) (Halobacterium marismortui).